Here is a 335-residue protein sequence, read N- to C-terminus: MSTEGGFGSTSSSDAQQSLQSFWPRVMEEIRNLTVKDFRVQELPLARIKKIMKLDEDVKMISAEAPVLFAKAAQIFITELTLRAWIHTEDNKRRTLQRNDIAMAITKFDQFDFLIDIVPRDELKPPKRQEEVRQSVTPAEPVQYYFTLAQQPTAVQVQGQQQGQQTTSSTTTIQPGQIIIAQPQQGQTTPVTMQVGEGQQVQIVQAQPQGQAQQAQSGTGQTMQVMQQIITNTGEIQQIPVQLNAGQLQYIRLAQPVSGTQVVQGQIQTLATNAQQITQTEVQQGQQQFSQFTDGQQLYQIQQVTMPAGQDLAQPMFIQSANQPSDGQTPQVTGD.

The protein belongs to the NFYC/HAP5 subunit family. Heterotrimeric transcription factor composed of three components, NF-YA, NF-YB and NF-YC. NF-YB and NF-YC must interact and dimerize for NF-YA association and DNA binding.

The protein resides in the nucleus. Its function is as follows. Component of the sequence-specific heterotrimeric transcription factor (NF-Y) which specifically recognizes a 5'-CCAAT-3' box motif found in the promoters of its target genes. NF-Y can function as both an activator and a repressor, depending on its interacting cofactors. This chain is Nuclear transcription factor Y subunit gamma (Nfyc), found in Rattus norvegicus (Rat).